Consider the following 93-residue polypeptide: MEVGEVITLVDEEQNEFEFAVIDLLEVEGKKYAILVPAVEEDEEELEDEEEAVILRLEMDEDGNEILVDLEDEEWEMVADAWTEKMEDEGSDE.

Belongs to the UPF0473 family.

In Carboxydothermus hydrogenoformans (strain ATCC BAA-161 / DSM 6008 / Z-2901), this protein is UPF0473 protein CHY_0543.